A 273-amino-acid polypeptide reads, in one-letter code: ATP synthase F(1) complex subunit gamma, mitochondrial (273 aa).

Lys-14 carries the N6-acetyllysine modification. Position 24 is an N6-succinyllysine (Lys-24). Lys-30 carries the post-translational modification N6-acetyllysine. Lys-90 carries the N6-acetyllysine; alternate modification. Lys-90 is modified (N6-succinyllysine; alternate). Lys-113 carries the N6-acetyllysine modification. Ser-121 is modified (phosphoserine). Lys-129 carries the post-translational modification N6-acetyllysine; alternate. Lys-129 carries the post-translational modification N6-succinyllysine; alternate. At Lys-172 the chain carries N6-acetyllysine. The residue at position 245 (Lys-245) is an N6-succinyllysine.

This sequence belongs to the ATPase gamma chain family. Component of the ATP synthase complex composed at least of ATP5F1A/subunit alpha, ATP5F1B/subunit beta, ATP5MC1/subunit c (homooctomer), MT-ATP6/subunit a, MT-ATP8/subunit 8, ATP5ME/subunit e, ATP5MF/subunit f, ATP5MG/subunit g, ATP5MK/subunit k, ATP5MJ/subunit j, ATP5F1C/subunit gamma, ATP5F1D/subunit delta, ATP5F1E/subunit epsilon, ATP5PF/subunit F6, ATP5PB/subunit b, ATP5PD/subunit d, ATP5PO/subunit OSCP. ATP synthase complex consists of a soluble F(1) head domain (subunits alpha(3) and beta(3)) - the catalytic core - and a membrane F(0) domain - the membrane proton channel (subunits c, a, 8, e, f, g, k and j). These two domains are linked by a central stalk (subunits gamma, delta, and epsilon) rotating inside the F1 region and a stationary peripheral stalk (subunits F6, b, d, and OSCP). Interacts with FLVCR2; this interaction occurs in the absence of heme and is disrupted upon heme binding.

It is found in the mitochondrion inner membrane. Its function is as follows. Subunit gamma, of the mitochondrial membrane ATP synthase complex (F(1)F(0) ATP synthase or Complex V) that produces ATP from ADP in the presence of a proton gradient across the membrane which is generated by electron transport complexes of the respiratory chain. ATP synthase complex consist of a soluble F(1) head domain - the catalytic core - and a membrane F(1) domain - the membrane proton channel. These two domains are linked by a central stalk rotating inside the F(1) region and a stationary peripheral stalk. During catalysis, ATP synthesis in the catalytic domain of F(1) is coupled via a rotary mechanism of the central stalk subunits to proton translocation. In vivo, can only synthesize ATP although its ATP hydrolase activity can be activated artificially in vitro. With the central stalk subunit delta, is essential for the biogenesis of F(1) catalytic part of the ATP synthase complex namely in the formation of F1 assembly intermediate. The polypeptide is ATP synthase F(1) complex subunit gamma, mitochondrial (Rattus norvegicus (Rat)).